Here is a 280-residue protein sequence, read N- to C-terminus: Acetylglutamate kinase (280 aa).

Substrate is bound by residues Gly-57–Gly-58, Arg-79, and Asn-174.

The protein belongs to the acetylglutamate kinase family. ArgB subfamily.

The protein localises to the cytoplasm. It carries out the reaction N-acetyl-L-glutamate + ATP = N-acetyl-L-glutamyl 5-phosphate + ADP. The protein operates within amino-acid biosynthesis; L-arginine biosynthesis; N(2)-acetyl-L-ornithine from L-glutamate: step 2/4. Its function is as follows. Catalyzes the ATP-dependent phosphorylation of N-acetyl-L-glutamate. In Helicobacter hepaticus (strain ATCC 51449 / 3B1), this protein is Acetylglutamate kinase.